We begin with the raw amino-acid sequence, 85 residues long: Kunitz-type serine protease inhibitor homolog beta-bungarotoxin B2 chain (85 aa).

The N-terminal stretch at 1 to 24 (MSSGGLLLLLGLLTLCAELTPVSS) is a signal peptide. One can recognise a BPTI/Kunitz inhibitor domain in the interval 31–81 (CDKPPDTKICQTVVRAFYYKPSAKRCVQFRYGGCNGNGNHFKSDHLCRCEC). 3 cysteine pairs are disulfide-bonded: C31–C81, C40–C64, and C56–C77.

It belongs to the venom Kunitz-type family. Heterodimer; disulfide-linked. The A chains have phospholipase A2 activity and the B chains show homology with the basic protease inhibitors. Expressed by the venom gland.

The protein resides in the secreted. In terms of biological role, beta-2-bungarotoxin is a presynaptic neurotoxin of the venom. The B chain is homologous to venom basic protease inhibitors but has no protease inhibitor activity and blocks voltage-gated potassium channels (Kv). This is Kunitz-type serine protease inhibitor homolog beta-bungarotoxin B2 chain from Bungarus multicinctus (Many-banded krait).